We begin with the raw amino-acid sequence, 525 residues long: Hydroxyneurosporene desaturase (525 aa).

It belongs to the carotenoid/retinoid oxidoreductase family.

It carries out the reaction rhodopin + A = (3E)-3,4-didehydrorhodopin + AH2. Its pathway is carotenoid biosynthesis; spheroidene biosynthesis. Its function is as follows. Catalyzes the introduction of C-3,4 double bonds into 1-hydroxyneurosporene (1-HO-Neu) to yield demethylspheroidene (DMS). The preferred substrates are 1-hydroxy-neurosporene, 1-hydroxy-lycopene and 1,1-dihydroxyneurosporene, however the 3,4-didehydrolycopene derivatives such as 1,1-dihydroxy-3,4-didehydrolycopene, 1-methoxy-1-hydroxy-3,4-didehydrolycopene and 1-hydroxy-3,4-didehydrolycopene are also efficiently converted. 1-HO-carotene derivatives can be also used. This Rubrivivax gelatinosus (Rhodocyclus gelatinosus) protein is Hydroxyneurosporene desaturase (crtD).